Consider the following 2376-residue polypeptide: Cell morphogenesis protein PAG1 (2376 aa).

The tract at residues 1–30 (MASRFTFPPQRDQGIGFTFPPTNKAEGSSN) is disordered. The residue at position 141 (serine 141) is a Phosphoserine. The tract at residues 275 to 294 (SSSNTTSKYKHNNNTNNLPG) is disordered. Serine 1144 carries the post-translational modification Phosphoserine. Threonine 2264 is subject to Phosphothreonine. Phosphoserine is present on residues serine 2267 and serine 2355.

This sequence to S.pombe mor2. In terms of assembly, associates with CBK1.

In terms of biological role, seems to play a role in cell morphogenesis. This is Cell morphogenesis protein PAG1 (TAO3) from Saccharomyces cerevisiae (strain ATCC 204508 / S288c) (Baker's yeast).